We begin with the raw amino-acid sequence, 162 residues long: Protein A49 (162 aa).

Belongs to the poxviridae A49 protein family.

The sequence is that of Protein A49 from Homo sapiens (Human).